The primary structure comprises 655 residues: p-hydroxybenzoic acid efflux pump subunit AaeB (655 aa).

Helical transmembrane passes span phenylalanine 13–leucine 33, tryptophan 38–proline 58, leucine 69–isoleucine 89, leucine 93–valine 113, tryptophan 121–leucine 141, glutamate 152–isoleucine 172, leucine 370–valine 390, phenylalanine 407–proline 427, glutamine 431–valine 451, methionine 459–phenylalanine 479, and phenylalanine 482–leucine 502.

This sequence belongs to the aromatic acid exporter ArAE (TC 2.A.85) family.

The protein localises to the cell inner membrane. Forms an efflux pump with AaeA. Could function as a metabolic relief valve, allowing to eliminate certain compounds when they accumulate to high levels in the cell. The polypeptide is p-hydroxybenzoic acid efflux pump subunit AaeB (Shigella sonnei (strain Ss046)).